Here is a 462-residue protein sequence, read N- to C-terminus: ATP synthase subunit beta (462 aa).

150-157 contributes to the ATP binding site; the sequence is GGAGVGKT.

It belongs to the ATPase alpha/beta chains family. F-type ATPases have 2 components, CF(1) - the catalytic core - and CF(0) - the membrane proton channel. CF(1) has five subunits: alpha(3), beta(3), gamma(1), delta(1), epsilon(1). CF(0) has three main subunits: a(1), b(2) and c(9-12). The alpha and beta chains form an alternating ring which encloses part of the gamma chain. CF(1) is attached to CF(0) by a central stalk formed by the gamma and epsilon chains, while a peripheral stalk is formed by the delta and b chains. In this bacterium the a and b subunits are transcribed but do not seem to be translated, thus the ATP synthase consists of the alpha, beta, gamma, delta, epsilon and c subunits.

It is found in the cell membrane. It catalyses the reaction ATP + H2O + 4 H(+)(in) = ADP + phosphate + 5 H(+)(out). Produces ATP from ADP in the presence of a proton gradient across the membrane. The catalytic sites are hosted primarily by the beta subunits. In Moorella thermoacetica (strain ATCC 39073 / JCM 9320), this protein is ATP synthase subunit beta.